The chain runs to 213 residues: Heat shock protein 30C (213 aa).

Positions 61–80 (SKDTEMRRITDQNRQSRESE) are enriched in basic and acidic residues. Disordered regions lie at residues 61 to 93 (SKDT…GKDH) and 174 to 213 (ALPP…QKVD). The sHSP domain maps to 76–188 (SRESEGTSPN…PETPIPISMD (113 aa)).

The protein belongs to the small heat shock protein (HSP20) family.

The protein is Heat shock protein 30C (hsp30c) of Xenopus laevis (African clawed frog).